Consider the following 280-residue polypeptide: Dual adapter for phosphotyrosine and 3-phosphotyrosine and 3-phosphoinositide (280 aa).

An SH2 domain is found at 35 to 129 (WYHGNLTRHA…GTLMVLKHPY (95 aa)). At Tyr139 the chain carries Phosphotyrosine. Position 141 is a phosphoserine (Ser141). Residues 164 to 259 (LGTKEGYLTK…WIKILRWKLS (96 aa)) form the PH domain.

Interacts with PtdIns(3,4,5)P3 and PLCG2. Phosphorylated on tyrosine residues.

It is found in the cytoplasm. Its subcellular location is the membrane. In terms of biological role, may act as a B-cell-associated adapter that regulates B-cell antigen receptor (BCR)-signaling downstream of PI3K. This Mus musculus (Mouse) protein is Dual adapter for phosphotyrosine and 3-phosphotyrosine and 3-phosphoinositide (Dapp1).